The primary structure comprises 179 residues: Large ribosomal subunit protein uL6 (179 aa).

This sequence belongs to the universal ribosomal protein uL6 family. As to quaternary structure, part of the 50S ribosomal subunit.

Its function is as follows. This protein binds to the 23S rRNA, and is important in its secondary structure. It is located near the subunit interface in the base of the L7/L12 stalk, and near the tRNA binding site of the peptidyltransferase center. This is Large ribosomal subunit protein uL6 from Bifidobacterium adolescentis (strain ATCC 15703 / DSM 20083 / NCTC 11814 / E194a).